A 593-amino-acid polypeptide reads, in one-letter code: Aspartate--tRNA(Asp/Asn) ligase (593 aa).

Residue E172 participates in L-aspartate binding. The segment at 196–199 (QLFK) is aspartate. R218 is an L-aspartate binding site. Residues 218–220 (RDE) and Q227 contribute to the ATP site. H450 is an L-aspartate binding site. E484 provides a ligand contact to ATP. An L-aspartate-binding site is contributed by R491. 536 to 539 (GLDR) is a binding site for ATP.

This sequence belongs to the class-II aminoacyl-tRNA synthetase family. Type 1 subfamily. Homodimer.

It localises to the cytoplasm. It carries out the reaction tRNA(Asx) + L-aspartate + ATP = L-aspartyl-tRNA(Asx) + AMP + diphosphate. In terms of biological role, aspartyl-tRNA synthetase with relaxed tRNA specificity since it is able to aspartylate not only its cognate tRNA(Asp) but also tRNA(Asn). Reaction proceeds in two steps: L-aspartate is first activated by ATP to form Asp-AMP and then transferred to the acceptor end of tRNA(Asp/Asn). The protein is Aspartate--tRNA(Asp/Asn) ligase of Nitrosomonas eutropha (strain DSM 101675 / C91 / Nm57).